Consider the following 166-residue polypeptide: Co-chaperone protein HscB homolog (166 aa).

The 73-residue stretch at Gln3–Thr75 folds into the J domain.

Belongs to the HscB family. Interacts with HscA and stimulates its ATPase activity.

Its function is as follows. Co-chaperone involved in the maturation of iron-sulfur cluster-containing proteins. Seems to help targeting proteins to be folded toward HscA. This Neisseria meningitidis serogroup A / serotype 4A (strain DSM 15465 / Z2491) protein is Co-chaperone protein HscB homolog.